A 210-amino-acid chain; its full sequence is Ribosomal RNA small subunit methyltransferase G (210 aa).

Residues Gly77, Phe82, 100–102, 128–129, and Arg141 each bind S-adenosyl-L-methionine; these read ERS and VE.

It belongs to the methyltransferase superfamily. RNA methyltransferase RsmG family.

The protein resides in the cytoplasm. Specifically methylates the N7 position of a guanine in 16S rRNA. The chain is Ribosomal RNA small subunit methyltransferase G from Borrelia duttonii (strain Ly).